Here is a 435-residue protein sequence, read N- to C-terminus: MSTGFFGDIQKVRYEGPESDNPLAFRHYNADEIVLGKRMEDHLRFAVAYWHSFAWEGGDPFGGRTFDRPWFSNEIDAAKLKADVAFEFFSLLGAPYYCFHDADVRPEGRNFAENTRYLNEIVDIFEKKQAETGMKLLWGTANLFSNRRYMAGAATNPDPDVFAFAAATVKTCIDATKRLGGENYVLWGGREGYETLLNTDLSRELDHMGRFLSLVVEYKHKIGFKGTILIEPKPQEPTKHQYDYDVATVYGFLKRYGLENEVKVNIEQGHAILAGHSFEHELALARTLGIFGSIDMNRNDYQSGWDTDQFPNNVPEMALAYYQVLLAGGFTTGGTNFDAKLRRQSLDSQDLLIGHIGGMDCCARGLKAAARMLEDGALSKPLDERYAGWNGEFGKRLLSGLSLDQIAGEVEAKDINPQPKSGRQEYLENIVNHYV.

Active-site residues include H100 and D103. 7 residues coordinate Mg(2+): E231, E267, H270, D295, D306, D308, and D338.

Belongs to the xylose isomerase family. As to quaternary structure, homotetramer. Requires Mg(2+) as cofactor.

It localises to the cytoplasm. It catalyses the reaction alpha-D-xylose = alpha-D-xylulofuranose. The sequence is that of Xylose isomerase from Brucella suis biovar 1 (strain 1330).